A 103-amino-acid polypeptide reads, in one-letter code: Large ribosomal subunit protein bL21 (103 aa).

This sequence belongs to the bacterial ribosomal protein bL21 family. As to quaternary structure, part of the 50S ribosomal subunit. Contacts protein L20.

Functionally, this protein binds to 23S rRNA in the presence of protein L20. The polypeptide is Large ribosomal subunit protein bL21 (Aeromonas salmonicida (strain A449)).